A 131-amino-acid polypeptide reads, in one-letter code: Small ribosomal subunit protein uS8 (131 aa).

It belongs to the universal ribosomal protein uS8 family. In terms of assembly, part of the 30S ribosomal subunit. Contacts proteins S5 and S12.

Its function is as follows. One of the primary rRNA binding proteins, it binds directly to 16S rRNA central domain where it helps coordinate assembly of the platform of the 30S subunit. The protein is Small ribosomal subunit protein uS8 of Geobacillus stearothermophilus (Bacillus stearothermophilus).